Consider the following 218-residue polypeptide: LOB domain-containing protein 29 (218 aa).

Residues 10–112 (SPCGACKFLR…AELEILKQQA (103 aa)) form the LOB domain.

It belongs to the LOB domain-containing protein family. In terms of tissue distribution, expressed in roots.

Functionally, involved in lateral root formation. Regulated by the transcriptional activators ARF7 and ARF19. The chain is LOB domain-containing protein 29 (LBD29) from Arabidopsis thaliana (Mouse-ear cress).